We begin with the raw amino-acid sequence, 221 residues long: MKTRVVLILALSVCIEAASEVIRARAYIFKAEAGKIPTELIGTIDFDQSGSFLKLNGSVSGLAAGKHGFHIHEKGDTGNGCLSAGGHYNPHKLSHGAPDDSNRHIGDLGNIESPASGDTLISVSDSLASLSGQYSIIGRSVVIHEKTDDLGRGTSDQSKTTGNAGSRLACGTIGTVEERILETTTASLPPVTQSQPIGSSSYYYSTFYLPIILYFLLSRIL.

The first 19 residues, methionine 1–serine 19, serve as a signal peptide directing secretion. A glycan (N-linked (GlcNAc...) asparagine) is linked at asparagine 56. Histidine 70, histidine 72, and histidine 87 together coordinate Cu cation. Cysteine 81 and cysteine 170 are disulfide-bonded. The Zn(2+) site is built by histidine 87, histidine 95, histidine 104, and aspartate 107. Histidine 144 is a binding site for Cu cation.

It belongs to the Cu-Zn superoxide dismutase family. Cu cation is required as a cofactor. Requires Zn(2+) as cofactor. As to expression, isoform 2 is preferentially expressed in eggs.

The protein resides in the secreted. The protein localises to the extracellular space. It localises to the membrane. It catalyses the reaction 2 superoxide + 2 H(+) = H2O2 + O2. Protects cells against oxidative stress by converting superoxide radicals to hydrogen peroxide. Oxidative stress is involved in various biological dysfunctions and senescence. This Caenorhabditis elegans protein is Extracellular superoxide dismutase [Cu-Zn] (sod-4).